The primary structure comprises 552 residues: ATP synthase subunit alpha (552 aa).

ATP is bound at residue 173-180; that stretch reads GDRQTGKT. The segment at 516–552 is disordered; the sequence is DGKPLVNEPAPSPLDPGLVRQESIPVHRPAARKDDEG.

This sequence belongs to the ATPase alpha/beta chains family. F-type ATPases have 2 components, CF(1) - the catalytic core - and CF(0) - the membrane proton channel. CF(1) has five subunits: alpha(3), beta(3), gamma(1), delta(1), epsilon(1). CF(0) has three main subunits: a(1), b(2) and c(9-12). The alpha and beta chains form an alternating ring which encloses part of the gamma chain. CF(1) is attached to CF(0) by a central stalk formed by the gamma and epsilon chains, while a peripheral stalk is formed by the delta and b chains.

The protein resides in the cell membrane. The catalysed reaction is ATP + H2O + 4 H(+)(in) = ADP + phosphate + 5 H(+)(out). In terms of biological role, produces ATP from ADP in the presence of a proton gradient across the membrane. The alpha chain is a regulatory subunit. The sequence is that of ATP synthase subunit alpha from Frankia casuarinae (strain DSM 45818 / CECT 9043 / HFP020203 / CcI3).